We begin with the raw amino-acid sequence, 454 residues long: tRNA modification GTPase MnmE (454 aa).

3 residues coordinate (6S)-5-formyl-5,6,7,8-tetrahydrofolate: arginine 23, glutamate 80, and lysine 120. Residues 216–377 (GMKVVIAGRP…LRDHLKQSMG (162 aa)) enclose the TrmE-type G domain. Position 226 (asparagine 226) interacts with K(+). GTP contacts are provided by residues 226 to 231 (NAGKSS), 245 to 251 (TDIAGTT), 270 to 273 (DTAG), 335 to 338 (NKAD), and 358 to 360 (SAR). Residue serine 230 coordinates Mg(2+). K(+) is bound by residues threonine 245, isoleucine 247, and threonine 250. Threonine 251 contacts Mg(2+). Lysine 454 is a binding site for (6S)-5-formyl-5,6,7,8-tetrahydrofolate.

It belongs to the TRAFAC class TrmE-Era-EngA-EngB-Septin-like GTPase superfamily. TrmE GTPase family. In terms of assembly, homodimer. Heterotetramer of two MnmE and two MnmG subunits. K(+) serves as cofactor.

The protein resides in the cytoplasm. In terms of biological role, exhibits a very high intrinsic GTPase hydrolysis rate. Involved in the addition of a carboxymethylaminomethyl (cmnm) group at the wobble position (U34) of certain tRNAs, forming tRNA-cmnm(5)s(2)U34. This chain is tRNA modification GTPase MnmE, found in Yersinia pestis bv. Antiqua (strain Antiqua).